Reading from the N-terminus, the 646-residue chain is Threonine--tRNA ligase (646 aa).

The TGS domain occupies 1 to 63 (MADLSIIFPD…SSGGSIEIIT (63 aa)). Positions 244-541 (DHRKLGKELG…LIEEYKGAFP (298 aa)) are catalytic. Cys337, His388, and His518 together coordinate Zn(2+).

Belongs to the class-II aminoacyl-tRNA synthetase family. In terms of assembly, homodimer. Zn(2+) is required as a cofactor.

The protein localises to the cytoplasm. The enzyme catalyses tRNA(Thr) + L-threonine + ATP = L-threonyl-tRNA(Thr) + AMP + diphosphate + H(+). In terms of biological role, catalyzes the attachment of threonine to tRNA(Thr) in a two-step reaction: L-threonine is first activated by ATP to form Thr-AMP and then transferred to the acceptor end of tRNA(Thr). Also edits incorrectly charged L-seryl-tRNA(Thr). The chain is Threonine--tRNA ligase from Oceanobacillus iheyensis (strain DSM 14371 / CIP 107618 / JCM 11309 / KCTC 3954 / HTE831).